The following is a 1485-amino-acid chain: Chromosome partition protein MukB (1485 aa).

34-41 (GGNGAGKS) is an ATP binding site. 2 coiled-coil regions span residues 337 to 480 (LNLV…QAYQ) and 509 to 605 (QHLA…PVWL). Residues 666 to 783 (PSGAEDARLI…EVPLFGRAAR (118 aa)) form a flexible hinge region. Coiled coils occupy residues 835–915 (EAEI…IQQH) and 977–1116 (GMLT…AKAG).

It belongs to the SMC family. MukB subfamily. In terms of assembly, homodimerization via its hinge domain. Binds to DNA via its C-terminal region. Interacts, and probably forms a ternary complex, with MukE and MukF via its C-terminal region. The complex formation is stimulated by calcium or magnesium. Interacts with tubulin-related protein FtsZ.

The protein localises to the cytoplasm. It is found in the nucleoid. Functionally, plays a central role in chromosome condensation, segregation and cell cycle progression. Functions as a homodimer, which is essential for chromosome partition. Involved in negative DNA supercoiling in vivo, and by this means organize and compact chromosomes. May achieve or facilitate chromosome segregation by condensation DNA from both sides of a centrally located replisome during cell division. This chain is Chromosome partition protein MukB, found in Yersinia pseudotuberculosis serotype O:3 (strain YPIII).